A 201-amino-acid chain; its full sequence is Holliday junction resolvase RecU (201 aa).

Mg(2+) contacts are provided by Thr-87, Asp-89, Asp-102, and Gln-121.

This sequence belongs to the RecU family. Mg(2+) serves as cofactor.

It is found in the cytoplasm. It catalyses the reaction Endonucleolytic cleavage at a junction such as a reciprocal single-stranded crossover between two homologous DNA duplexes (Holliday junction).. Endonuclease that resolves Holliday junction intermediates in genetic recombination. Cleaves mobile four-strand junctions by introducing symmetrical nicks in paired strands. Promotes annealing of linear ssDNA with homologous dsDNA. Required for DNA repair, homologous recombination and chromosome segregation. This is Holliday junction resolvase RecU from Levilactobacillus brevis (strain ATCC 367 / BCRC 12310 / CIP 105137 / JCM 1170 / LMG 11437 / NCIMB 947 / NCTC 947) (Lactobacillus brevis).